We begin with the raw amino-acid sequence, 1382 residues long: ATP-dependent RNA helicase TDRD9 (1382 aa).

The segment at 36-62 is disordered; it reads AAREEVQRQDVAPGAGPAAQAPALAQA. Over residues 47–62 the composition is skewed to low complexity; that stretch reads APGAGPAAQAPALAQA. The Helicase ATP-binding domain maps to 142–308; that stretch reads VSLIESNSVV…FAVPVQNKMN (167 aa). 155-162 serves as a coordination point for ATP; sequence GATGSGKS. A DEAH box motif is present at residues 254 to 257; that stretch reads DEVH. Residues 377–544 enclose the Helicase C-terminal domain; sequence SGAQFVLERS…ILKVKLLDMG (168 aa). Residues 944 to 1004 form the Tudor domain; sequence HPHPDLVCLA…MEIPCQFLEL (61 aa).

This sequence belongs to the DEAD box helicase family. DEAH subfamily. Interacts with piRNA-associated proteins PIWIL1 and PIWIL4.

The protein localises to the cytoplasm. It is found in the nucleus. It catalyses the reaction ATP + H2O = ADP + phosphate + H(+). ATP-binding RNA helicase required during spermatogenesis. Required to repress transposable elements and prevent their mobilization, which is essential for the germline integrity. Acts via the piRNA metabolic process, which mediates the repression of transposable elements during meiosis by forming complexes composed of piRNAs and Piwi proteins and governs the methylation and subsequent repression of transposons. Acts downstream of piRNA biogenesis: exclusively required for transposon silencing in the nucleus, suggesting that it acts as a nuclear effector in the nucleus together with PIWIL4. This is ATP-dependent RNA helicase TDRD9 from Homo sapiens (Human).